Reading from the N-terminus, the 957-residue chain is Ribonuclease 3-like protein 3 (957 aa).

The region spanning 4-142 (VEAVEKILNY…IAATVFIDVN (139 aa)) is the RNase III 1 domain. In terms of domain architecture, DRBM 1 spans 307 to 382 (NGRGELIEIC…AYHMIRALES (76 aa)). In terms of domain architecture, RNase III 2 spans 415–551 (VEAVEKILNY…VAGAVYIDVK (137 aa)). DRBM domains lie at 566–645 (EPIY…KLSE) and 837–912 (DEKG…ALES).

Its function is as follows. Ribonuclease that cleaves double-stranded RNA (dsRNA). The sequence is that of Ribonuclease 3-like protein 3 (RTL3) from Arabidopsis thaliana (Mouse-ear cress).